We begin with the raw amino-acid sequence, 117 residues long: Holo-[acyl-carrier-protein] synthase (117 aa).

Residues D8 and E59 each coordinate Mg(2+).

Belongs to the P-Pant transferase superfamily. AcpS family. Requires Mg(2+) as cofactor.

It is found in the cytoplasm. It catalyses the reaction apo-[ACP] + CoA = holo-[ACP] + adenosine 3',5'-bisphosphate + H(+). In terms of biological role, transfers the 4'-phosphopantetheine moiety from coenzyme A to a Ser of acyl-carrier-protein. The chain is Holo-[acyl-carrier-protein] synthase from Staphylococcus carnosus (strain TM300).